A 915-amino-acid polypeptide reads, in one-letter code: Scaffold attachment factor B1 (915 aa).

A compositionally biased stretch (low complexity) spans 1–24 (MAETLSGLGDSGAAGAAALSSASS). The disordered stretch occupies residues 1–33 (MAETLSGLGDSGAAGAAALSSASSETGTRRLSD). Ala-2 is modified (N-acetylalanine). 2 positions are modified to phosphoserine: Ser-24 and Ser-55. The SAP domain maps to 31 to 65 (LSDLRVIDLRAELRKRNVDSSGNKSVLMERLKKAI). The segment at 64-118 (AIEDEGGNPDEIEITSEGNKKTSKRSSKGRKPEEEGVEDNGLEENSGDGQEDVET) is disordered. Over residues 67-77 (DEGGNPDEIEI) the composition is skewed to acidic residues. The residue at position 79 (Ser-79) is a Phosphoserine. A compositionally biased stretch (acidic residues) spans 98–118 (EGVEDNGLEENSGDGQEDVET). Residues Lys-172 and Lys-186 each participate in a glycyl lysine isopeptide (Lys-Gly) (interchain with G-Cter in SUMO2) cross-link. The residue at position 188 (Thr-188) is a Phosphothreonine. Phosphoserine is present on residues Ser-195, Ser-197, and Ser-209. Residues 221–407 (LGETCKSEPV…EKGRSSCGRN (187 aa)) form a disordered region. The span at 225–234 (CKSEPVKEES) shows a compositional bias: basic and acidic residues. Lys-231 participates in a covalent cross-link: Glycyl lysine isopeptide (Lys-Gly) (interchain with G-Cter in SUMO). A compositionally biased stretch (polar residues) spans 275–286 (SESTAHAQSSKA). Over residues 293–309 (VKREPAEQPGDGERTDC) the composition is skewed to basic and acidic residues. Lys-294 is covalently cross-linked (Glycyl lysine isopeptide (Lys-Gly) (interchain with G-Cter in SUMO)). Positions 319–330 (EQSSAASELAEA) are enriched in low complexity. Positions 346 to 359 (EARDSKEDGRKFDF) are enriched in basic and acidic residues. The segment covering 371 to 383 (ESSTSEGADQKMS) has biased composition (polar residues). A Glycyl lysine isopeptide (Lys-Gly) (interchain with G-Cter in SUMO2) cross-link involves residue Lys-381. Phosphoserine occurs at positions 383 and 384. Residues 390 to 401 (DTKRLSKEEKGR) show a composition bias toward basic and acidic residues. Residue Lys-392 forms a Glycyl lysine isopeptide (Lys-Gly) (interchain with G-Cter in SUMO2) linkage. Residues 406 to 484 (RNFWVSGLSS…KMISVEKAKN (79 aa)) form the RRM domain. Residue Ser-415 is modified to Phosphoserine. Basic and acidic residues-rich tracts occupy residues 477-551 (ISVE…ERSR) and 559-570 (GTERTVVMDKSK). Disordered regions lie at residues 477–641 (ISVE…EREE), 671–708 (RERM…ERRP), and 749–915 (FDHR…TRRY). Glycyl lysine isopeptide (Lys-Gly) (interchain with G-Cter in SUMO2) cross-links involve residues Lys-483, Lys-514, Lys-543, and Lys-570. Residues 528–792 (GDDGSGEKSK…RHGGPERHGR (265 aa)) form an interaction with POLR2A. Interaction with SFRS1; SFRS9 and SFRS10 region. Residue Lys-578 forms a Glycyl lysine isopeptide (Lys-Gly) (interchain with G-Cter in SUMO1); alternate linkage. Lys-578 is covalently cross-linked (Glycyl lysine isopeptide (Lys-Gly) (interchain with G-Cter in SUMO2); alternate). Residues Ser-580, Ser-582, Ser-601, and Ser-604 each carry the phosphoserine modification. Residues 581 to 641 (GSKERASKSQ…RMQAQWEREE (61 aa)) are compositionally biased toward basic and acidic residues. Residues 599–616 (KRSVVSFDKVKEPRKSRD) carry the Nuclear localization signal motif. Positions 599 to 915 (KRSVVSFDKV…PSDARFTRRY (317 aa)) are interaction with SAFB2. The residue at position 607 (Lys-607) is an N6-acetyllysine. A compositionally biased stretch (basic and acidic residues) spans 749-796 (FDHRDRGRYPDHSVDRREGSRSMMGEREGQHYPERHGGPERHGRDSRD). The residue at position 811 (Arg-811) is an Omega-N-methylarginine. 2 stretches are compositionally biased toward basic and acidic residues: residues 817-832 (PRRD…DDRS) and 841-851 (MMDRDHKRWQG). Lys-847 is covalently cross-linked (Glycyl lysine isopeptide (Lys-Gly) (interchain with G-Cter in SUMO2)). 3 positions are modified to asymmetric dimethylarginine: Arg-868, Arg-874, and Arg-884. The segment covering 892–901 (GMQGGFGGQS) has biased composition (gly residues). Positions 905–915 (RPSDARFTRRY) are enriched in basic and acidic residues.

As to quaternary structure, monomer and homodimer. Forms heterodimers with SAFB2. Interacts with KHDRBS3. Interacts with CLK2. Interacts with POLR2A, SRSF1/ASF, SRSF9/SRp30c and SFSF10/TRA2B. Interacts with isoform 1 and isoform 2 of SRPK1 and inhibits its activity. Interacts with RBMX. Interacts with FUS. Interacts with ZBED4. In terms of processing, sumoylated by PIAS1 with SUMO1 and SUMO2/3, desumoylated by SENP1. Sumoylation is required for transcriptional repressor activity. As to expression, ubiquitous. Expressed at high levels in the CNS and at low levels in the liver. Expressed in a wide number of breast cancer cell lines.

The protein resides in the nucleus. Functionally, binds to scaffold/matrix attachment region (S/MAR) DNA and forms a molecular assembly point to allow the formation of a 'transcriptosomal' complex (consisting of SR proteins and RNA polymerase II) coupling transcription and RNA processing. Functions as an estrogen receptor corepressor and can also bind to the HSP27 promoter and decrease its transcription. Thereby acts as a negative regulator of cell proliferation. When associated with RBMX, binds to and stimulates transcription from the SREBF1 promoter. The protein is Scaffold attachment factor B1 (SAFB) of Homo sapiens (Human).